Here is a 274-residue protein sequence, read N- to C-terminus: Thiamine kinase (274 aa).

The protein belongs to the thiamine kinase family.

The enzyme catalyses thiamine + ATP = thiamine phosphate + ADP + H(+). It functions in the pathway cofactor biosynthesis; thiamine diphosphate biosynthesis; thiamine phosphate from thiamine: step 1/1. In terms of biological role, catalyzes the ATP-dependent phosphorylation of thiamine to thiamine phosphate. Is involved in thiamine salvage. The polypeptide is Thiamine kinase (Shigella dysenteriae serotype 1 (strain Sd197)).